The primary structure comprises 97 residues: uncharacterized protein (97 aa).

This is an uncharacterized protein from Sulfolobus islandicus filamentous virus (isolate Iceland/Hveragerdi) (SIFV).